Here is a 146-residue protein sequence, read N- to C-terminus: Large ribosomal subunit protein uL15 (146 aa).

The segment at 1–56 (MKLHELRAAEGANKASKRVGRGTGSGLGKTSGRGQNGQNSRSGGGVRPGFEGGQMP) is disordered. Composition is skewed to gly residues over residues 21-35 (RGTG…GRGQ) and 42-52 (SGGGVRPGFEG).

The protein belongs to the universal ribosomal protein uL15 family. Part of the 50S ribosomal subunit.

Functionally, binds to the 23S rRNA. This is Large ribosomal subunit protein uL15 from Clostridium botulinum (strain Okra / Type B1).